A 336-amino-acid chain; its full sequence is Heme A synthase (336 aa).

8 helical membrane-spanning segments follow: residues 12–32 (LKLW…VGGL), 97–117 (LLAR…TLYF), 130–150 (IFFL…SGLI), 161–181 (SIHL…ILDI), 194–214 (LFLL…AFLS), 256–276 (FLHR…NFIY), 285–305 (YVLF…ITLI), and 310–330 (ITYA…YFLI). Heme is bound at residue His-258. Heme is bound at residue His-316.

This sequence belongs to the COX15/CtaA family. Type 2 subfamily. In terms of assembly, interacts with CtaB. Heme b is required as a cofactor.

It is found in the cell membrane. The catalysed reaction is Fe(II)-heme o + 2 A + H2O = Fe(II)-heme a + 2 AH2. It participates in porphyrin-containing compound metabolism; heme A biosynthesis; heme A from heme O: step 1/1. Catalyzes the conversion of heme O to heme A by two successive hydroxylations of the methyl group at C8. The first hydroxylation forms heme I, the second hydroxylation results in an unstable dihydroxymethyl group, which spontaneously dehydrates, resulting in the formyl group of heme A. The sequence is that of Heme A synthase from Pelagibacter ubique (strain HTCC1062).